A 722-amino-acid chain; its full sequence is MAAPSLLNWRRVSSFTGPVPRARHGHRAVAIRELMIIFGGGNEGIADELHVYNTVTNQWFLPAVRGDIPPGCAAHGFVCDGTRILVFGGMVEYGRYSNELYELQASRWLWKKVKPQPPPSGFPPCPRLGHSFSLYGNKCYLFGGLANESEDSNNNVPRYLNDFYELELQHGSGVVGWSIPATKGVVPSPRESHTAIIYCKKDSASPKMYVFGGMCGARLDDLWQLDLETMSWSKPETKGTVPLPRSLHTASVIGNKMYIFGGWVPHKGENPETSPHDCEWRCTSSFSYLNLDTAEWTTLVSDSQEDKKNSRPRPRAGHCAVAIGTRLYFWSGRDGYKKALNSQVCCKDLWYLDTEKPPAPSQVQLIKATTNSFHVKWDEVPTVEGYLLQLNTDLTYQATSSDSSAAPSVLGGRMDPHRQGSNSTLHNSVSDTVNSTKTEHTAVRGTSLRSKPDSRAVDSSAALHSPLAPNTSNNSSWVTDMLRKNEVDEICALPATKISRVEVHAAATPFSKETPSNPVAILKAEQWCDVGIFKNNTALVSQFYLLPKGKQSMSKVGNADVPDYSLLKKQDLVPGTVYKFRVAAINGCGIGPLSKVSEFKTCTPGFPGAPSTVRISKNVDGIHLSWEPPTSPSGNILEYSAYLAIRTAQMQDNPSQLVFMRIYCGLKTSCTVTAGQLANAHIDYTSRPAIVFRISAKNEKGYGPATQVRWLQDQEKDVGPWF.

4 Kelch repeats span residues 34 to 79, 83 to 130, 207 to 255, and 257 to 303; these read LMII…GFVC, RILV…RLGH, KMYV…VIGN, and MYIF…VSDS. Fibronectin type-III domains lie at 359–460, 514–604, and 606–716; these read APSQ…VDSS, TPSN…TCTP, and FPGA…DQEK. The interval 398–476 is disordered; the sequence is ATSSDSSAAP…LAPNTSNNSS (79 aa). Over residues 419 to 436 the composition is skewed to polar residues; it reads QGSNSTLHNSVSDTVNST.

As to quaternary structure, binds KMT2A/MLL1. Component of the MLL1/MLL complex, at least composed of KMT2A/MLL1, ASH2L, RBBP5, DPY30, WDR5, MEN1, HCFC1 and HCFC2. Interacts with TASOR. As to expression, expressed in the spermatogonia, spermatocytes and ovary.

It is found in the cytoplasm. The protein resides in the nucleus. The protein is Host cell factor 2 (Hcfc2) of Mus musculus (Mouse).